The sequence spans 431 residues: Glutamate--tRNA ligase 1 (431 aa).

The 'HIGH' region motif lies at 6-16; sequence PSPTGDMHIGN. The 'KMSKS' region motif lies at 235–239; sequence KMSKR. Lysine 238 is an ATP binding site.

Belongs to the class-I aminoacyl-tRNA synthetase family. Glutamate--tRNA ligase type 1 subfamily. Monomer.

It localises to the cytoplasm. It carries out the reaction tRNA(Glu) + L-glutamate + ATP = L-glutamyl-tRNA(Glu) + AMP + diphosphate. Catalyzes the attachment of glutamate to tRNA(Glu) in a two-step reaction: glutamate is first activated by ATP to form Glu-AMP and then transferred to the acceptor end of tRNA(Glu). This Campylobacter jejuni subsp. jejuni serotype O:6 (strain 81116 / NCTC 11828) protein is Glutamate--tRNA ligase 1.